The following is a 684-amino-acid chain: Acetyl-coenzyme A synthetase 2 (684 aa).

CoA-binding positions include Arg207 to Lys210 and Thr326. Residues Gly402–Pro404, Asp426–Thr431, Asp517, and Arg532 each bind ATP. Ser540 lines the CoA pocket. Arg543 is an ATP binding site. Residue Arg613 coordinates CoA.

It belongs to the ATP-dependent AMP-binding enzyme family.

The catalysed reaction is acetate + ATP + CoA = acetyl-CoA + AMP + diphosphate. In Kluyveromyces lactis (strain ATCC 8585 / CBS 2359 / DSM 70799 / NBRC 1267 / NRRL Y-1140 / WM37) (Yeast), this protein is Acetyl-coenzyme A synthetase 2 (ACS2).